We begin with the raw amino-acid sequence, 302 residues long: Tetrahydromethanopterin S-methyltransferase subunit E (302 aa).

6 helical membrane passes run 3-23 (PLISMGVLALIGVAATIAGAS), 86-106 (PLFALVFGSLIAACVHATFAV), 132-152 (ITPIMGYAFITTFCILVVSYL), 155-175 (VVLGHPFPLTMLAFIWGITIG), 233-253 (PVTGLAFGMTVFLGSWITTIF), and 259-279 (LGWLSVIAGIVIVFILIIWNW).

It belongs to the MtrE family. In terms of assembly, the complex is composed of 8 subunits; MtrA, MtrB, MtrC, MtrD, MtrE, MtrF, MtrG and MtrH.

The protein resides in the cell membrane. It catalyses the reaction 5-methyl-5,6,7,8-tetrahydromethanopterin + coenzyme M + 2 Na(+)(in) = 5,6,7,8-tetrahydromethanopterin + methyl-coenzyme M + 2 Na(+)(out). It participates in one-carbon metabolism; methanogenesis from CO(2); methyl-coenzyme M from 5,10-methylene-5,6,7,8-tetrahydromethanopterin: step 2/2. Part of a complex that catalyzes the formation of methyl-coenzyme M and tetrahydromethanopterin from coenzyme M and methyl-tetrahydromethanopterin. This is an energy-conserving, sodium-ion translocating step. The polypeptide is Tetrahydromethanopterin S-methyltransferase subunit E (Methanosarcina barkeri (strain Fusaro / DSM 804)).